A 557-amino-acid chain; its full sequence is Glutamine--tRNA ligase (557 aa).

Residues 42–52 (PEPNGYLHIGH) carry the 'HIGH' region motif. ATP contacts are provided by residues 43–45 (EPN) and 49–55 (HIGHAKS). Aspartate 75 and tyrosine 220 together coordinate L-glutamine. ATP contacts are provided by residues threonine 239 and 270–271 (RL). The 'KMSKS' region signature appears at 277-281 (LTSKR).

Belongs to the class-I aminoacyl-tRNA synthetase family. In terms of assembly, monomer.

Its subcellular location is the cytoplasm. It carries out the reaction tRNA(Gln) + L-glutamine + ATP = L-glutaminyl-tRNA(Gln) + AMP + diphosphate. This is Glutamine--tRNA ligase from Haemophilus influenzae (strain 86-028NP).